The chain runs to 94 residues: Large ribosomal subunit protein uL23 (94 aa).

The protein belongs to the universal ribosomal protein uL23 family. As to quaternary structure, part of the 50S ribosomal subunit. Contacts protein L29, and trigger factor when it is bound to the ribosome.

In terms of biological role, one of the early assembly proteins it binds 23S rRNA. One of the proteins that surrounds the polypeptide exit tunnel on the outside of the ribosome. Forms the main docking site for trigger factor binding to the ribosome. The polypeptide is Large ribosomal subunit protein uL23 (Latilactobacillus sakei subsp. sakei (strain 23K) (Lactobacillus sakei subsp. sakei)).